A 294-amino-acid polypeptide reads, in one-letter code: UDP-N-acetylenolpyruvoylglucosamine reductase (294 aa).

The FAD-binding PCMH-type domain occupies 26 to 189; it reads VGGQADVLFK…IEAEFKGVSS (164 aa). Arginine 169 is a catalytic residue. Cysteine 218 serves as the catalytic Proton donor. Residue glutamate 288 is part of the active site.

The protein belongs to the MurB family. FAD serves as cofactor.

It is found in the cytoplasm. The enzyme catalyses UDP-N-acetyl-alpha-D-muramate + NADP(+) = UDP-N-acetyl-3-O-(1-carboxyvinyl)-alpha-D-glucosamine + NADPH + H(+). It participates in cell wall biogenesis; peptidoglycan biosynthesis. Cell wall formation. The polypeptide is UDP-N-acetylenolpyruvoylglucosamine reductase (Wolbachia pipientis subsp. Culex pipiens (strain wPip)).